Consider the following 145-residue polypeptide: 3-hydroxyacyl-[acyl-carrier-protein] dehydratase FabZ (145 aa).

His-48 is an active-site residue.

This sequence belongs to the thioester dehydratase family. FabZ subfamily.

It is found in the cytoplasm. It carries out the reaction a (3R)-hydroxyacyl-[ACP] = a (2E)-enoyl-[ACP] + H2O. Involved in unsaturated fatty acids biosynthesis. Catalyzes the dehydration of short chain beta-hydroxyacyl-ACPs and long chain saturated and unsaturated beta-hydroxyacyl-ACPs. This chain is 3-hydroxyacyl-[acyl-carrier-protein] dehydratase FabZ, found in Stutzerimonas stutzeri (strain A1501) (Pseudomonas stutzeri).